Consider the following 68-residue polypeptide: DNA-directed RNA polymerase subunit Rpo10 (68 aa).

Residues Cys-7, Cys-10, Cys-44, and Cys-45 each contribute to the Zn(2+) site.

It belongs to the archaeal Rpo10/eukaryotic RPB10 RNA polymerase subunit family. In terms of assembly, part of the RNA polymerase complex. Requires Zn(2+) as cofactor.

It localises to the cytoplasm. It carries out the reaction RNA(n) + a ribonucleoside 5'-triphosphate = RNA(n+1) + diphosphate. Functionally, DNA-dependent RNA polymerase (RNAP) catalyzes the transcription of DNA into RNA using the four ribonucleoside triphosphates as substrates. In Methanococcus maripaludis (strain C6 / ATCC BAA-1332), this protein is DNA-directed RNA polymerase subunit Rpo10.